Consider the following 479-residue polypeptide: Ubiquinone biosynthesis monooxygenase COQ6, mitochondrial (479 aa).

Residues 1 to 17 (MFFSKVMLTRRILVRGL) constitute a mitochondrion transit peptide.

It belongs to the UbiH/COQ6 family. As to quaternary structure, component of a multi-subunit COQ enzyme complex, composed of at least COQ3, COQ4, COQ5, COQ6, COQ7 and COQ9. It depends on FAD as a cofactor.

The protein resides in the mitochondrion inner membrane. The catalysed reaction is 4-hydroxy-3-(all-trans-hexaprenyl)benzoate + 2 reduced [2Fe-2S]-[ferredoxin] + O2 + 2 H(+) = 3,4-dihydroxy-5-(all-trans-hexaprenyl)benzoate + 2 oxidized [2Fe-2S]-[ferredoxin] + H2O. The enzyme catalyses 2-methoxy-6-(all-trans-hexaprenyl)phenol + 2 reduced [2Fe-2S]-[ferredoxin] + O2 + 2 H(+) = 2-methoxy-6-(all-trans-hexaprenyl)benzene-1,4-diol + 2 oxidized [2Fe-2S]-[ferredoxin] + H2O. It catalyses the reaction 4-amino-3-(all-trans-hexaprenyl)benzoate + 2 reduced [2Fe-2S]-[ferredoxin] + O2 + 2 H(+) = 4-amino-5-hydroxy-3-(all-trans-hexaprenyl)benzoate + 2 oxidized [2Fe-2S]-[ferredoxin] + H2O. It carries out the reaction 4-amino-5-hydroxy-3-(all-trans-hexaprenyl)benzoate + 4 reduced [2Fe-2S]-[ferredoxin] + O2 + 5 H(+) = 3,4-dihydroxy-5-(all-trans-hexaprenyl)benzoate + 4 oxidized [2Fe-2S]-[ferredoxin] + NH4(+) + H2O. It participates in cofactor biosynthesis; ubiquinone biosynthesis. Functionally, FAD-dependent monooxygenase required for two non-consecutive steps during ubiquinone biosynthesis. Required for the C5-ring hydroxylation during ubiquinone biosynthesis by catalyzing the hydroxylation of 4-hydroxy-3-(all-trans-hexaprenyl)benzoic acid to 3,4-dihydroxy-5-(all-trans-hexaprenyl)benzoic acid. Also acts downstream of COQ4, for the C1-hydroxylation during ubiquinone biosynthesis by catalyzing the hydroxylation of 2-methoxy-6-(all-trans-hexaprenyl)phenol to 2-methoxy-6-(all-trans-hexaprenyl)benzene-1,4-diol. The electrons required for the hydroxylation reaction are funneled indirectly from NADPH via ferredoxin (YAH1) and ferredoxin reductase (ARH1) to COQ6. Can also convert 3-hexaprenyl-4-aminobenzoic acid (HAB), a COQ2-prenylated pABA, to DHHB in a two step process. HAB is first hydroxylated at C5 to yield 3-hexaprenyl-4-amino-5-hydroxybenzoic acid (HHAB) which is further deaminated at C4 by COQ6 to produce DHHB. This chain is Ubiquinone biosynthesis monooxygenase COQ6, mitochondrial, found in Saccharomyces cerevisiae (strain ATCC 204508 / S288c) (Baker's yeast).